The primary structure comprises 44 residues: Cytochrome b559 subunit beta (44 aa).

A helical membrane pass occupies residues 19-35 (WLAIHGLAIPTVFFLGA). H23 serves as a coordination point for heme.

Belongs to the PsbE/PsbF family. As to quaternary structure, heterodimer of an alpha subunit and a beta subunit. PSII is composed of 1 copy each of membrane proteins PsbA, PsbB, PsbC, PsbD, PsbE, PsbF, PsbH, PsbI, PsbJ, PsbK, PsbL, PsbM, PsbT, PsbX, PsbY, PsbZ, Psb30/Ycf12, at least 3 peripheral proteins of the oxygen-evolving complex and a large number of cofactors. It forms dimeric complexes. The cofactor is heme b.

It is found in the plastid. The protein resides in the chloroplast thylakoid membrane. This b-type cytochrome is tightly associated with the reaction center of photosystem II (PSII). PSII is a light-driven water:plastoquinone oxidoreductase that uses light energy to abstract electrons from H(2)O, generating O(2) and a proton gradient subsequently used for ATP formation. It consists of a core antenna complex that captures photons, and an electron transfer chain that converts photonic excitation into a charge separation. The sequence is that of Cytochrome b559 subunit beta from Porphyra purpurea (Red seaweed).